Here is a 269-residue protein sequence, read N- to C-terminus: 5'-nucleotidase SurE (269 aa).

A divalent metal cation is bound by residues Asp8, Asp9, Ser39, and Asn92.

This sequence belongs to the SurE nucleotidase family. The cofactor is a divalent metal cation.

The protein resides in the cytoplasm. The enzyme catalyses a ribonucleoside 5'-phosphate + H2O = a ribonucleoside + phosphate. Its function is as follows. Nucleotidase that shows phosphatase activity on nucleoside 5'-monophosphates. The protein is 5'-nucleotidase SurE of Psychrobacter cryohalolentis (strain ATCC BAA-1226 / DSM 17306 / VKM B-2378 / K5).